A 586-amino-acid polypeptide reads, in one-letter code: Retron Ec67 protein (586 aa).

A Reverse transcriptase domain is found at 29–262 (FLTNVLYRIG…SRQEVTGLTV (234 aa)). Residues Asp120, Asp201, and Asp202 each contribute to the Mg(2+) site.

Belongs to the bacterial reverse transcriptase family.

It carries out the reaction DNA(n) + a 2'-deoxyribonucleoside 5'-triphosphate = DNA(n+1) + diphosphate. The catalysed reaction is Endonucleolytic cleavage to 5'-phosphomonoester.. Its function is as follows. Reverse transcriptase (RT) component of antiviral defense system retron Ec67, minimally composed of a non-coding RNA (ncRNA) and this RT. Expression of these 2 elements confers protection against bacteriophage T5. At multiplicity of infection (MOI) of 0.02 cultures grow normally when infected with T5 without collapsing, at MOI 2 cultures enter growth stasis. Responsible for synthesis of msDNA-Ec67 (a branched molecule with RNA linked by a 2',5'-phosphodiester bond to ssDNA). The retron transcript serves as primer (from a conserved internal G residue) and template for the reaction, and codes for the RT. Can use other retrons as substrate (msDNA-Mx162 and msDNA-Ec86). Also able to synthesize DNA from a DNA template at least in vitro, although the enzyme is less active with a DNA template. The polypeptide is Retron Ec67 protein (Escherichia coli).